Consider the following 214-residue polypeptide: Adenylate kinase (214 aa).

14 to 19 (GSGKGT) contacts ATP. The tract at residues 34–63 (SSGDLFRSAIKSATPLGSKAAEYINKGLLV) is NMP. AMP is bound by residues Ser35, Arg40, 61-63 (LLV), 89-92 (GFPR), and Gln96. An LID region spans residues 130 to 163 (SRFICPACNYVYNQSQGFKECPTCHVALIRRSDD). An ATP-binding site is contributed by Arg131. Zn(2+) is bound by residues Cys134 and Cys137. 140–141 (VY) lines the ATP pocket. The Zn(2+) site is built by Cys150 and Cys153. AMP contacts are provided by Arg160 and Arg171. Thr199 contacts ATP.

It belongs to the adenylate kinase family. As to quaternary structure, monomer.

Its subcellular location is the cytoplasm. It catalyses the reaction AMP + ATP = 2 ADP. It participates in purine metabolism; AMP biosynthesis via salvage pathway; AMP from ADP: step 1/1. Functionally, catalyzes the reversible transfer of the terminal phosphate group between ATP and AMP. Plays an important role in cellular energy homeostasis and in adenine nucleotide metabolism. The polypeptide is Adenylate kinase (Chlamydia caviae (strain ATCC VR-813 / DSM 19441 / 03DC25 / GPIC) (Chlamydophila caviae)).